Here is a 720-residue protein sequence, read N- to C-terminus: Phosphoribosylformylglycinamidine synthase subunit PurL (720 aa).

Residue His-34 is part of the active site. Tyr-37 lines the ATP pocket. A Mg(2+)-binding site is contributed by Glu-83. Residues 84 to 87 (SHNH) and Arg-106 contribute to the substrate site. The active-site Proton acceptor is the His-85. Residue Asp-107 participates in Mg(2+) binding. A substrate-binding site is contributed by Gln-231. Asp-259 contacts Mg(2+). 303–305 (ESQ) lines the substrate pocket. Positions 480 and 517 each coordinate ATP. Asn-518 serves as a coordination point for Mg(2+). Residue Ser-520 participates in substrate binding.

The protein belongs to the FGAMS family. In terms of assembly, monomer. Part of the FGAM synthase complex composed of 1 PurL, 1 PurQ and 2 PurS subunits.

The protein resides in the cytoplasm. The catalysed reaction is N(2)-formyl-N(1)-(5-phospho-beta-D-ribosyl)glycinamide + L-glutamine + ATP + H2O = 2-formamido-N(1)-(5-O-phospho-beta-D-ribosyl)acetamidine + L-glutamate + ADP + phosphate + H(+). It participates in purine metabolism; IMP biosynthesis via de novo pathway; 5-amino-1-(5-phospho-D-ribosyl)imidazole from N(2)-formyl-N(1)-(5-phospho-D-ribosyl)glycinamide: step 1/2. In terms of biological role, part of the phosphoribosylformylglycinamidine synthase complex involved in the purines biosynthetic pathway. Catalyzes the ATP-dependent conversion of formylglycinamide ribonucleotide (FGAR) and glutamine to yield formylglycinamidine ribonucleotide (FGAM) and glutamate. The FGAM synthase complex is composed of three subunits. PurQ produces an ammonia molecule by converting glutamine to glutamate. PurL transfers the ammonia molecule to FGAR to form FGAM in an ATP-dependent manner. PurS interacts with PurQ and PurL and is thought to assist in the transfer of the ammonia molecule from PurQ to PurL. The sequence is that of Phosphoribosylformylglycinamidine synthase subunit PurL from Haloarcula marismortui (strain ATCC 43049 / DSM 3752 / JCM 8966 / VKM B-1809) (Halobacterium marismortui).